The primary structure comprises 399 residues: Tryptophan synthase beta chain (399 aa).

At Lys92 the chain carries N6-(pyridoxal phosphate)lysine.

Belongs to the TrpB family. Tetramer of two alpha and two beta chains. Requires pyridoxal 5'-phosphate as cofactor.

The catalysed reaction is (1S,2R)-1-C-(indol-3-yl)glycerol 3-phosphate + L-serine = D-glyceraldehyde 3-phosphate + L-tryptophan + H2O. It functions in the pathway amino-acid biosynthesis; L-tryptophan biosynthesis; L-tryptophan from chorismate: step 5/5. In terms of biological role, the beta subunit is responsible for the synthesis of L-tryptophan from indole and L-serine. This is Tryptophan synthase beta chain from Acidithiobacillus ferrooxidans (strain ATCC 23270 / DSM 14882 / CIP 104768 / NCIMB 8455) (Ferrobacillus ferrooxidans (strain ATCC 23270)).